The primary structure comprises 303 residues: N-acetyl-D-glucosamine kinase (303 aa).

ATP-binding positions include 4–11 and 133–140; these read GFDIGGTK and GVGGGLVL. Positions 157, 177, 179, and 184 each coordinate Zn(2+).

The protein belongs to the ROK (NagC/XylR) family. NagK subfamily.

The enzyme catalyses N-acetyl-D-glucosamine + ATP = N-acetyl-D-glucosamine 6-phosphate + ADP + H(+). Its pathway is cell wall biogenesis; peptidoglycan recycling. Its function is as follows. Catalyzes the phosphorylation of N-acetyl-D-glucosamine (GlcNAc) derived from cell-wall degradation, yielding GlcNAc-6-P. The chain is N-acetyl-D-glucosamine kinase from Salmonella gallinarum (strain 287/91 / NCTC 13346).